The chain runs to 1460 residues: Venom prothrombin activator pseutarin-C non-catalytic subunit (1460 aa).

A signal peptide spans 1–30; sequence MGRYSVSPVPKCLLLMFLGWSGLKYYQVNA. The Plastocyanin-like 1 domain maps to 32–196; sequence QLREYHIAAQ…SGLIGALLIC (165 aa). F5/8 type A domains follow at residues 32-330 and 351-685; these read QLRE…LNIK and KNWE…FLDA. Residues K124, E139, D142, and D143 each coordinate Ca(2+). N156 is a glycosylation site (N-linked (GlcNAc...) asparagine). The cysteines at positions 170 and 196 are disulfide-linked. Residues N204 and N242 are each glycosylated (N-linked (GlcNAc...) asparagine). Plastocyanin-like domains are found at residues 206–330, 351–529, and 539–685; these read SQKF…LNIK, KNWE…LLVC, and VQNK…FLDA. An intrachain disulfide couples C251 to C332. 2 N-linked (GlcNAc...) asparagine glycosylation sites follow: N406 and N471. C503 and C529 are joined by a disulfide. The N-linked (GlcNAc...) asparagine glycan is linked to N557. Intrachain disulfides connect C672/C1032, C966/C992, C1147/C1298, and C1303/C1457. The b stretch occupies residues 693–818; sequence GNEEEEEDDG…PDDIAGRYLR (126 aa). The propeptide at 773 to 818 is activation peptide (connecting region); it reads SFKGSVAEEELKHTALALEEDAHASDPRIDSNSARNPDDIAGRYLR. 2 Plastocyanin-like domains span residues 824 to 992 and 1001 to 1143; these read NKRR…ILIC and NRTI…FTVI. The F5/8 type A 3 domain occupies 824–1143; that stretch reads NKRRYYIAAE…RGMQALFTVI (320 aa). Ca(2+) contacts are provided by K920, F935, D938, and D939. A glycan (N-linked (GlcNAc...) asparagine) is linked at N944. N-linked (GlcNAc...) asparagine glycans are attached at residues N1001 and N1180. 2 F5/8 type C domains span residues 1147 to 1298 and 1303 to 1457; these read CKLP…LLGC and CSVP…LFGC.

It belongs to the multicopper oxidase family. As to quaternary structure, heterodimer of a light and a heavy chains; non-disulfide-linked. The interaction between the two chains is calcium-dependent. Found in its active form associated with pseutarin-C catalytic subunit (AC Q56VR3). In physiological conditions, blood coagulation factor V and factor Va are inactivated by activated protein C (APC) through proteolytic degradation of the heavy chain. However, pseutarin-C non-catalytic subunit (factor V-like protein) retains its full activity even at high concentration of APC. This has two explanations: this protein has only one of the three cleavage sites present in factor V that are targeted by the APC for inactivation, and the binding with the catalytic subunit protect the cleavage site from inactivation. Expressed by the venom gland.

Its subcellular location is the secreted. Snake prothrombin activator that attacks the hemostatic system of prey. This non-catalytic subunit is functionally similar to blood coagulation factor V. It serves as a critical cofactor for the prothrombinase activity of the catalytic subunit, which is similar to the blood coagulation factor X. The complex converts prothrombin to thrombin by sequential cleavage at two positions, Arg-320 followed by Arg-271. Cleavage at Arg-320 produces an active intermediate known as meizothrombin. Meizothrombin is the 'second' substrate for prothrombinase, and it docks in an altered manner to present the second cleavage site (271). Cleavage at Arg-271 releases active thrombin from its pro-fragment. This order of events is reversed if the protease component of prothrombinase is used on its own, suggesting that the 271 site is inherently more accessible to proteolysis. The complex converts prothrombin to thrombin in presence but also in the absence of membrane. The sequence is that of Venom prothrombin activator pseutarin-C non-catalytic subunit from Pseudonaja textilis (Eastern brown snake).